A 93-amino-acid chain; its full sequence is Large ribosomal subunit protein uL23 (93 aa).

It belongs to the universal ribosomal protein uL23 family. As to quaternary structure, part of the 50S ribosomal subunit. Contacts protein L29, and trigger factor when it is bound to the ribosome.

Functionally, one of the early assembly proteins it binds 23S rRNA. One of the proteins that surrounds the polypeptide exit tunnel on the outside of the ribosome. Forms the main docking site for trigger factor binding to the ribosome. In Aliarcobacter butzleri (strain RM4018) (Arcobacter butzleri), this protein is Large ribosomal subunit protein uL23.